We begin with the raw amino-acid sequence, 430 residues long: Arrestin-related trafficking adapter 10 (430 aa).

The interval 55–75 is disordered; the sequence is AEADRHSSRLPQDPQTQYTKE. Residues 63-72 show a composition bias toward polar residues; it reads RLPQDPQTQY.

It belongs to the ART10 family.

It is found in the cytoplasm. Functionally, may regulate endocytosis by recruiting RSP5 ubiquitin ligase activity to specific plasma membrane proteins in response to extracellular stimuli. This chain is Arrestin-related trafficking adapter 10 (ART10), found in Eremothecium gossypii (strain ATCC 10895 / CBS 109.51 / FGSC 9923 / NRRL Y-1056) (Yeast).